Reading from the N-terminus, the 195-residue chain is Thymidine kinase (195 aa).

Residues 15–22 and 88–91 each bind ATP; these read GSMFSGKS and DEVQ. The active-site Proton acceptor is the Glu-89. Substrate is bound at residue Phe-120. The Zn(2+) site is built by Cys-145 and Cys-148. Residues 170 to 174 and Tyr-179 contribute to the substrate site; that span reads IILVG. Zn(2+) contacts are provided by Cys-183 and Cys-186.

The protein belongs to the thymidine kinase family. As to quaternary structure, homotetramer.

Its subcellular location is the cytoplasm. The enzyme catalyses thymidine + ATP = dTMP + ADP + H(+). This is Thymidine kinase from Bacillus cereus (strain ATCC 14579 / DSM 31 / CCUG 7414 / JCM 2152 / NBRC 15305 / NCIMB 9373 / NCTC 2599 / NRRL B-3711).